Consider the following 123-residue polypeptide: MIQQESMLNVADNSGARSVKCIKVLGGSRRRYACVGDIIVISIKEAIPRGKVKKGEVLKAVVVRTSKGVRRPDGSIIRFDTNACVILNKNTEQPIGTRIFGPVTRELRNEKFMKIISLAPEVL.

This sequence belongs to the universal ribosomal protein uL14 family. As to quaternary structure, part of the 50S ribosomal subunit. Forms a cluster with proteins L3 and L19. In the 70S ribosome, L14 and L19 interact and together make contacts with the 16S rRNA in bridges B5 and B8.

In terms of biological role, binds to 23S rRNA. Forms part of two intersubunit bridges in the 70S ribosome. In Hamiltonella defensa subsp. Acyrthosiphon pisum (strain 5AT), this protein is Large ribosomal subunit protein uL14.